A 51-amino-acid polypeptide reads, in one-letter code: Cytochrome b559 subunit beta (51 aa).

The helical transmembrane segment at 26–42 threads the bilayer; it reads WLAVHALAVPTVFFIGS. His30 lines the heme pocket.

This sequence belongs to the PsbE/PsbF family. As to quaternary structure, heterodimer of an alpha subunit and a beta subunit. PSII is composed of 1 copy each of membrane proteins PsbA, PsbB, PsbC, PsbD, PsbE, PsbF, PsbH, PsbI, PsbJ, PsbK, PsbL, PsbM, PsbT, PsbY, PsbZ, Psb30/Ycf12, at least 3 peripheral proteins of the oxygen-evolving complex and a large number of cofactors. It forms dimeric complexes. Heme b is required as a cofactor.

It localises to the plastid. The protein localises to the chloroplast thylakoid membrane. Its function is as follows. This b-type cytochrome is tightly associated with the reaction center of photosystem II (PSII). PSII is a light-driven water:plastoquinone oxidoreductase that uses light energy to abstract electrons from H(2)O, generating O(2) and a proton gradient subsequently used for ATP formation. It consists of a core antenna complex that captures photons, and an electron transfer chain that converts photonic excitation into a charge separation. The polypeptide is Cytochrome b559 subunit beta (Bigelowiella natans (Pedinomonas minutissima)).